A 797-amino-acid polypeptide reads, in one-letter code: N-acetylneuraminate (7)9-O-acetyltransferase (797 aa).

Residues 1–18 lie on the Cytoplasmic side of the membrane; that stretch reads MAALAYNLGKREINHYFS. The chain crosses the membrane as a helical span at residues 19–39; the sequence is VRSAKVLALVAVLLLAACHLA. Residues 40 to 313 lie on the Lumenal side of the membrane; that stretch reads SRRYRGNDSC…QPRPPVTLIQ (274 aa). N-linked (GlcNAc...) asparagine glycosylation occurs at asparagine 46. Serine 94 functions as the Acyl-ester intermediate in the catalytic mechanism. N-linked (GlcNAc...) asparagine glycans are attached at residues asparagine 175 and asparagine 187. Catalysis depends on residues aspartate 270 and histidine 273. The chain crosses the membrane as a helical span at residues 314 to 334; that stretch reads KLAACFFTLSIIGYLIFYIIH. The Cytoplasmic segment spans residues 335–363; sequence RNAHRKNKPCTDLESGEEKKNIINTPVSS. A helical membrane pass occupies residues 364 to 384; sequence LEILLQSFCKLGLIMAYFYMC. The Lumenal segment spans residues 385 to 395; sequence DRANLFMKENK. The helical transmembrane segment at 396 to 416 threads the bilayer; sequence FYTHSSFFIPIIYILVLGVFY. The Cytoplasmic segment spans residues 417–439; it reads NENTKETKVLNREQTDEWKGWMQ. The chain crosses the membrane as a helical span at residues 440 to 460; sequence LVILIYHISGASTFLPVYMHI. A topological domain (lumenal) is located at residue arginine 461. A helical membrane pass occupies residues 462–482; the sequence is VLVAAYLFQTGYGHFSYFWIK. At 483-486 the chain is on the cytoplasmic side; the sequence is GDFG. Residues 487-507 form a helical membrane-spanning segment; it reads IYRVCQVLFRLNFLVVVLCIV. The Lumenal portion of the chain corresponds to 508–513; that stretch reads MDRPYQ. Residues 514–534 form a helical membrane-spanning segment; it reads FYYFVPLVTVWFMVIYVTLAL. The Cytoplasmic segment spans residues 535 to 547; sequence WPQIIQKKANGNC. The helical transmembrane segment at 548–568 threads the bilayer; it reads FWHFGLLLKLGFLLLFICFLA. Topologically, residues 569–605 are lumenal; the sequence is YSQGAFEKIFSLWPLSKCFELKGNVYEWWFRWRLDRY. The helical transmembrane segment at 606–626 threads the bilayer; that stretch reads VVFHGMLFAFIYLALQKRQIL. Over 627–638 the chain is Cytoplasmic; that stretch reads SEGKGEPLFSNK. A helical membrane pass occupies residues 639 to 659; that stretch reads ISNFLLFISVVSFLTYSIWAS. At 660 to 671 the chain is on the lumenal side; the sequence is SCKNKAECNELH. Residues 672 to 692 form a helical membrane-spanning segment; it reads PSVSVVQILAFILIRNIPGYA. The Cytoplasmic portion of the chain corresponds to 693–698; the sequence is RSVYSS. A helical membrane pass occupies residues 699 to 719; that stretch reads FFAWFGKISLELFICQYHIWL. The Lumenal segment spans residues 720-725; sequence AADTRG. A helical membrane pass occupies residues 726–746; the sequence is ILVLIPGNPMLNIIVSTFIFV. The Cytoplasmic segment spans residues 747 to 770; the sequence is CVAHEISQITNDLAQIIIPKDNSS. A helical transmembrane segment spans residues 771-791; sequence LLKRLACIAAFFCGLLILSSI. Residues 792-797 lie on the Lumenal side of the membrane; the sequence is QDKSKH.

This sequence belongs to the PC-esterase family. CASD1 subfamily. N-glycosylated. Highly expressed in peripheral B lymphocytes.

It is found in the golgi apparatus membrane. The enzyme catalyses CMP-N-acetyl-beta-neuraminate + acetyl-CoA = CMP-N-acetyl-9-O-acetyl-beta-neuraminate + CoA. It catalyses the reaction a ganglioside GD3 (d18:1(4E)) + acetyl-CoA = a ganglioside Ac-O-7-GD3(d18:1(4E)) + CoA. It carries out the reaction CMP-N-acetyl-beta-neuraminate + acetyl-CoA = CMP-N-acetyl-7-O-acetyl-beta-neuraminate + CoA. Key enzyme in the biosynthesis of O-acetylated (O-Ac) sialoglycans such as gangliosides O-AcGD3 and O-AcGD2, which affect various processes such as cell-cell interactions, host-pathogen recognition. Catalyzes the transfer of an acetyl group from a donor, the acetyl-coenzyme-A molecule (acetyl-CoA), to the C7/8/9 OH-position of a sialic acid residue. The primary site of O-acetyl group transfer on sialic acid seems to depend on cell type and can be C7, from which the O-acetyl group could subsequently migrate to the C8 and then to the C9 position, or at C9 with possibility of migrating to the C8 and then to the C7 position. Together with ST8SIA1 (GD3 synthase) it increases the levels of ganglioside Ac-O-7-GD3. Can transfer the acetyl group from acetyl-CoA to free sialate (N-acetylneuraminate, Neu5Ac) in vitro, but has preferred substrate specificity for CMP-activated sialate (CMP-Neu5Ac), resulting in the formation of 9-O-acetylated CMP-Neu5Ac (CMP-Neu5,9Ac2). CMP-Neu5,9Ac2 may be used by sialyltransferases as a sialate donor for glycoconjugate acceptors such as ganglioside GD3. O-acetylation at position C9 of ganglioside GD3 can counteract the pro-apoptotic effects of the ganglioside GD3 in tumor cells. In Homo sapiens (Human), this protein is N-acetylneuraminate (7)9-O-acetyltransferase.